A 547-amino-acid polypeptide reads, in one-letter code: Ribosome protection protein VmlR (547 aa).

One can recognise an ABC transporter 1 domain in the interval 5–200 (VTLTNVSYEV…FREKKRLTQQ (196 aa)). 37–44 (GKNGAGKS) contributes to the ATP binding site. The antibiotic resistance domain (ARD) stretch occupies residues 183–289 (GNYSGYMKFR…SIDTTHKTGK (107 aa)). Coiled coils occupy residues 193–222 (EKKR…GLAS) and 245–269 (AKRT…AKAE). One can recognise an ABC transporter 2 domain in the interval 292 to 504 (LEVQNVTKAF…REELRLKLET (213 aa)). 324–331 (GPNGSGKT) contributes to the ATP binding site. The segment at 483-547 (KQLNDVPSER…KELDHQDKKD (65 aa)) is C-terminal extension (CTE). Residues 488-543 (VPSERNEREELRLKLETERQEVLGKLSFMTPNDKGYKELDQAFNELTKRIKELDHQ) are a coiled coil.

This sequence belongs to the ABC transporter superfamily. ABCF family. ARE2 subfamily. Binds within the E-site of the 70S ribosome, where it contacts ribosomal proteins L1, L5, L33-1, S7, S11, the 16 and 23S rRNAs and the acceptor arm of the P-site tRNA.

It is found in the cytoplasm. In terms of biological role, recognizes and binds in the vacant E-site of ribosomes stalled by some peptidyltransferase center (PTC)-targeting antibiotics. Makes contact with the PTC and both ribosomal subunits. Induces conformational changes in the P-site, which allows it to dislodge the antibiotic from its PTC binding site. Binds to ribosomes either directly following translation initation or subsequent to E tRNA release during elongation. Involved in resistance to a narrow spectrum of antibiotics (the streptogramin A antibiotic virginiamycin M, the lincosamide antibiotic lincomycin and the pleuromutilin antibiotic tiamulin). This chain is Ribosome protection protein VmlR, found in Bacillus subtilis (strain 168).